Consider the following 902-residue polypeptide: Mitochondrial aspartate-glutamate transporter AGC1 (902 aa).

3 Solcar repeats span residues 528–614, 622–710, and 725–813; these read FDSL…MRNR, LSLF…LKKD, and LKTW…FKGF. 6 helical membrane passes run 534-554, 591-611, 622-642, 681-702, 731-751, and 786-806; these read FSLGSIAGCIGATVVYPIDFI, GPQLIGVAPEKAIKLTVNDFM, LSLFPEIISGASAGACQVIFT, GLYNGVAACLMRDVPFSAIYFP, LTAGAIAGMPAAFLTTPFDVI, and FKGGGARVLRSSPQFGFTLAA.

This sequence belongs to the mitochondrial carrier (TC 2.A.29) family.

The protein localises to the mitochondrion inner membrane. In terms of biological role, calcium-dependent mitochondrial aspartate and glutamate carrier. Transport of glutamate in mitochondria is required for mitochondrial transamination reactions and ornithine synthesis. Plays also a role in malate-aspartate NADH shuttle, which is critical for growth on acetate and fatty acids. The chain is Mitochondrial aspartate-glutamate transporter AGC1 (AGC1) from Saccharomyces cerevisiae (strain ATCC 204508 / S288c) (Baker's yeast).